We begin with the raw amino-acid sequence, 1500 residues long: MTRILTACKVVKTLKSGFGLANVTSKRQWDFSRPGIRLLSVKAQTAHIVLEDGTKMKGYSFGHPSSVAGEVVFNTGLGGYSEALTDPAYKGQILTMANPIIGNGGAPDTTARDELGLNKYMESDGIKVAGLLVLNYSHDYNHWLATKSLGQWLQEEKVPAIYGVDTRMLTKIIRDKGTMLGKIEFEGQSVDFVDPNKQNLIAEVSTKDVKVFGKGNPTKVVAVDCGIKNNVIRLLVKRGAEVHLVPWNHDFTQMDYDGLLIAGGPGNPALAQPLIQNVKKILESDRKEPLFGISTGNIITGLAAGAKSYKMSMANRGQNQPVLNITNRQAFITAQNHGYALDNTLPAGWKPLFVNVNDQTNEGIMHESKPFFAVQFHPEVSPGPTDTEYLFDSFFSLIKKGKGTTITSVLPKPALVASRVEVSKVLILGSGGLSIGQAGEFDYSGSQAVKAMKEENVKTVLMNPNIASVQTNEVGLKQADAVYFLPITPQFVTEVIKAERPDGLILGMGGQTALNCGVELFKRGVLKEYGVKVLGTSVESIMATEDRQLFSDKLNEINEKIAPSFAVESMEDALKAADTIGYPVMIRSAYALGGLGSGICPNKETLMDLGTKAFAMTNQILVERSVTGWKEIEYEVVRDADDNCVTVCNMENVDAMGVHTGDSVVVAPAQTLSNAEFQMLRRTSINVVRHLGIVGECNIQFALHPTSMEYCIIEVNARLSRSSALASKATGYPLAFIAAKIALGIPLPEIKNVVSGKTSACFEPSLDYMVTKIPRWDLDRFHGTSSRIGSSMKSVGEVMAIGRTFEESFQKALRMCHPSVDGFTPRLPMNKEWPANLDLRKELSEPSSTRIYAIAKALENNMSLDEIVKLTSIDKWFLYKMRDILNMDKTLKGLNSESVTEETLRQAKEIGFSDKQISKCLGLTEAQTRELRLKKNIHPWVKQIDTLAAEYPSVTNYLYVTYNGQEHDIKFDEHGIMVLGCGPYHIGSSVEFDWCAVSSIRTLRQLGKKTVVVNCNPETVSTDFDECDKLYFEELSLERILDIYHQEACNGCIISVGGQIPNNLAVPLYKNGVKIMGTSPLQIDRAEDRSIFSAVLDELKVAQAPWKAVNTLNEALEFANSVGYPCLLRPSYVLSGSAMNVVFSEDEMKRFLEEATRVSQEHPVVLTKFIEGAREVEMDAVGKEGRVISHAISEHVEDAGVHSGDATLMLPTQTISQGAIEKVKDATRKIAKAFAISGPFNVQFLVKGNDVLVIECNLRASRSFPFVSKTLGVDFIDVATKVMIGESVDEKHLPTLEQPIIPSDYVAIKAPMFSWPRLRDADPILRCEMASTGEVACFGEGIHTAFLKAMLSTGFKIPQKGILIGIQQSFRPRFLGVAEQLHNEGFKLFATEATSDWLNANNVPATPVAWPSQEGQNPSLSSIRKLIRDGSIDLVINLPNNNTKFVHDNYVIRRTAVDSGIALLTNFQVTKLFAEAVQKARTVDSKSLFHYRQYSAGKAA.

The transit peptide at 1-38 directs the protein to the mitochondrion; it reads MTRILTACKVVKTLKSGFGLANVTSKRQWDFSRPGIRL. Residues 39–218 are anthranilate phosphoribosyltransferase homolog; the sequence is LSVKAQTAHI…VKVFGKGNPT (180 aa). An N6-acetyllysine; alternate mark is found at Lys-55, Lys-57, and Lys-119. Lys-55 bears the N6-glutaryllysine; alternate mark. 3 positions are modified to N6-succinyllysine; alternate: Lys-55, Lys-57, and Lys-119. Phosphoserine is present on Ser-148. An N6-acetyllysine; alternate mark is found at Lys-157 and Lys-171. The residue at position 157 (Lys-157) is an N6-succinyllysine; alternate. Lys-171 carries the post-translational modification N6-glutaryllysine; alternate. Position 176 is an N6-glutaryllysine (Lys-176). Position 182 is an N6-acetyllysine (Lys-182). Residue Ser-189 is modified to Phosphoserine. Lys-197 bears the N6-acetyllysine mark. An N6-acetyllysine; alternate mark is found at Lys-207, Lys-210, Lys-214, Lys-219, and Lys-228. 5 positions are modified to N6-glutaryllysine; alternate: Lys-207, Lys-210, Lys-214, Lys-219, and Lys-228. Lys-207 is subject to N6-succinyllysine; alternate. Residue Lys-214 is modified to N6-succinyllysine; alternate. Positions 219-404 constitute a Glutamine amidotransferase type-1 domain; sequence KVVAVDCGIK…FSLIKKGKGT (186 aa). N6-glutaryllysine is present on Lys-237. Lys-279 carries the post-translational modification N6-acetyllysine. 4 positions are modified to N6-acetyllysine; alternate: Lys-280, Lys-287, Lys-307, and Lys-310. Lys-280 is subject to N6-glutaryllysine; alternate. Residues Lys-287 and Lys-307 each carry the N6-succinyllysine; alternate modification. 2 positions are modified to N6-glutaryllysine; alternate: Lys-307 and Lys-310. N6-succinyllysine is present on Lys-400. N6-glutaryllysine; alternate occurs at positions 402, 412, 453, and 458. An N6-succinyllysine; alternate mark is found at Lys-402 and Lys-412. N6-acetyllysine; alternate occurs at positions 412, 453, 458, 522, 527, and 532. An N6-succinyllysine; alternate mark is found at Lys-458, Lys-522, and Lys-527. Residues Lys-527 and Lys-532 each carry the N6-glutaryllysine; alternate modification. A Phosphoserine; alternate modification is found at Ser-537. Ser-537 carries an O-linked (GlcNAc) serine; alternate glycan. Position 540 is a phosphoserine (Ser-540). One can recognise an ATP-grasp 1 domain in the interval 551–743; that stretch reads SDKLNEINEK…LAFIAAKIAL (193 aa). N6-acetyllysine; alternate is present on residues Lys-553 and Lys-560. Residue Lys-553 is modified to N6-glutaryllysine; alternate. Lys-553 and Lys-560 each carry N6-succinyllysine; alternate. At Ser-569 the chain carries Phosphoserine. An N6-acetyllysine; alternate mark is found at Lys-575, Lys-603, and Lys-612. N6-succinyllysine; alternate occurs at positions 575, 603, and 612. Lys-630 bears the N6-acetyllysine mark. The residue at position 728 (Lys-728) is an N6-glutaryllysine. 8 positions are modified to N6-acetyllysine; alternate: Lys-751, Lys-757, Lys-772, Lys-793, Lys-811, Lys-831, Lys-841, and Lys-856. Residues Lys-751 and Lys-757 each carry the N6-succinyllysine; alternate modification. An N6-glutaryllysine; alternate mark is found at Lys-757, Lys-772, Lys-793, and Lys-811. N6-succinyllysine; alternate is present on Lys-793. N6-succinyllysine; alternate is present on Lys-831. Residues Lys-841 and Lys-856 each carry the N6-glutaryllysine; alternate modification. Lys-869 carries the post-translational modification N6-glutaryllysine. Residues Lys-875, Lys-889, and Lys-892 each carry the N6-acetyllysine; alternate modification. N6-glutaryllysine; alternate occurs at positions 875, 889, and 892. N6-succinyllysine; alternate occurs at positions 875, 889, and 892. Phosphoserine occurs at positions 896 and 898. Lys-908, Lys-915, and Lys-919 each carry N6-acetyllysine; alternate. N6-glutaryllysine; alternate occurs at positions 908, 915, and 919. Lys-915 and Lys-919 each carry N6-succinyllysine; alternate. N6-acetyllysine is present on Lys-935. Ser-1036 is subject to Phosphoserine. Lys-1074 bears the N6-acetyllysine; alternate mark. The residue at position 1074 (Lys-1074) is an N6-glutaryllysine; alternate. At Lys-1074 the chain carries N6-succinyllysine; alternate. 3 positions are modified to phosphoserine: Ser-1079, Ser-1090, and Ser-1093. The ATP-grasp 2 domain occupies 1093–1284; sequence SAVLDELKVA…FIDVATKVMI (192 aa). Lys-1100 bears the N6-acetyllysine; alternate mark. Lys-1100 bears the N6-succinyllysine; alternate mark. Lys-1149 carries the N6-succinyllysine modification. An N6-acetyllysine; alternate mark is found at Lys-1168 and Lys-1183. Residues Lys-1168 and Lys-1183 each carry the N6-glutaryllysine; alternate modification. N6-succinyllysine; alternate occurs at positions 1168 and 1183. The residue at position 1203 (Ser-1203) is a Phosphoserine. The residue at position 1222 (Lys-1222) is an N6-acetyllysine. At Lys-1224 the chain carries N6-glutaryllysine. 3 positions are modified to N6-acetyllysine; alternate: Lys-1232, Lys-1269, and Lys-1291. An N6-succinyllysine; alternate mark is found at Lys-1232, Lys-1269, and Lys-1291. Residue Ser-1331 is glycosylated (O-linked (GlcNAc) serine). The O-linked (GlcNAc) threonine glycan is linked to Thr-1332. One can recognise an MGS-like domain in the interval 1355–1500; it reads FKIPQKGILI…YRQYSAGKAA (146 aa). Lys-1356 bears the N6-acetyllysine; alternate mark. N6-glutaryllysine; alternate occurs at positions 1356 and 1360. An N6-succinyllysine; alternate mark is found at Lys-1356 and Lys-1360. Residues Thr-1391, Thr-1394, and Trp-1410 each contribute to the N-acetyl-L-glutamate site. Phosphoserine occurs at positions 1419 and 1431. Positions 1437 and 1440 each coordinate N-acetyl-L-glutamate. Residue Lys-1444 is modified to N6-acetyllysine; alternate. N6-succinyllysine; alternate is present on Lys-1444. An N-acetyl-L-glutamate-binding site is contributed by Asn-1449. N6-acetyllysine; alternate is present on residues Lys-1471, Lys-1479, and Lys-1486. An N6-succinyllysine; alternate mark is found at Lys-1471, Lys-1479, and Lys-1486. N6-glutaryllysine; alternate is present on residues Lys-1479 and Lys-1486.

Can form homooligomers (monomers as predominant form and dimers). 50% of the mature protein that was isolated had Leu-39 as its N-terminal residue and 50% had Ser-40 suggesting two adjacent processing sites. However, the possibility of proteolytic removal of Leu-39 during the isolation of the enzyme cannot be excluded. Undergoes proteolytic cleavage in the C-terminal region corresponding to the loss of approximately 12 AA residues from the C-terminus. Post-translationally, succinylated at Lys-287 and Lys-1291. Desuccinylated at Lys-1291 by SIRT5, leading to activation. In terms of processing, glutarylated. Glutarylation levels increase during fasting. Deglutarylated by SIRT5 at Lys-55, Lys-219, Lys-412, Lys-889, Lys-892, Lys-915, Lys-1360 and Lys-1486, leading to activation. Primarily in the liver and small intestine.

Its subcellular location is the mitochondrion. The protein resides in the nucleus. The protein localises to the nucleolus. It is found in the cell membrane. It carries out the reaction hydrogencarbonate + NH4(+) + 2 ATP = carbamoyl phosphate + 2 ADP + phosphate + 2 H(+). Its activity is regulated as follows. Requires N-acetyl-L-glutamate (NAG) as an allosteric activator. N-acetyl-L-beta-phenylglutamate (Phe-NAG) can also activate CPSase I, but with an activation constant that is 2-fold higher than that for NAG. Its function is as follows. Involved in the urea cycle of ureotelic animals where the enzyme plays an important role in removing excess ammonia from the cell. In Rattus norvegicus (Rat), this protein is Carbamoyl-phosphate synthase [ammonia], mitochondrial (Cps1).